The primary structure comprises 90 residues: MDHMSPRLRAFLSEPIGEKDVAWVDGISHELAINLVTKGFNKAYVLLGQFLLMHKREAEFQKWLICCCGATEFEARECSNCLKEWCSCFL.

This sequence belongs to the BAF family. In terms of assembly, homodimer. Heterodimerizes with BANF1.

The protein localises to the nucleus. It localises to the cytoplasm. Functionally, may play a role in BANF1 regulation and influence tissue-specific roles of BANF1. The polypeptide is Barrier-to-autointegration factor-like protein (BANF2) (Bos taurus (Bovine)).